The following is a 301-amino-acid chain: Glycine--tRNA ligase alpha subunit (301 aa).

It belongs to the class-II aminoacyl-tRNA synthetase family. In terms of assembly, tetramer of two alpha and two beta subunits.

The protein localises to the cytoplasm. It catalyses the reaction tRNA(Gly) + glycine + ATP = glycyl-tRNA(Gly) + AMP + diphosphate. In Shewanella baltica (strain OS223), this protein is Glycine--tRNA ligase alpha subunit.